A 298-amino-acid polypeptide reads, in one-letter code: Acidic endochitinase (298 aa).

The first 29 residues, methionine 1–alanine 29, serve as a signal peptide directing secretion. Residues glycine 30–valine 298 enclose the GH18 domain. Disulfide bonds link cysteine 49–cysteine 96 and cysteine 79–cysteine 86. Catalysis depends on glutamate 156, which acts as the Proton donor. A disulfide bridge connects residues cysteine 185 and cysteine 214.

The protein belongs to the glycosyl hydrolase 18 family. Chitinase class II subfamily.

It is found in the secreted. The protein localises to the extracellular space. The enzyme catalyses Random endo-hydrolysis of N-acetyl-beta-D-glucosaminide (1-&gt;4)-beta-linkages in chitin and chitodextrins.. Functionally, this protein functions as a defense against chitin containing fungal pathogens. This is Acidic endochitinase from Phaseolus angularis (Azuki bean).